A 174-amino-acid polypeptide reads, in one-letter code: CDP-archaeol synthase (174 aa).

5 helical membrane-spanning segments follow: residues 14-34 (ILEA…PVVA), 59-79 (IEGL…AALA), 83-103 (MLLA…DMAG), 118-138 (APLL…IALG), and 149-169 (AAAA…LLGL).

Belongs to the CDP-archaeol synthase family. The cofactor is Mg(2+).

The protein resides in the cell membrane. It catalyses the reaction 2,3-bis-O-(geranylgeranyl)-sn-glycerol 1-phosphate + CTP + H(+) = CDP-2,3-bis-O-(geranylgeranyl)-sn-glycerol + diphosphate. The protein operates within membrane lipid metabolism; glycerophospholipid metabolism. In terms of biological role, catalyzes the formation of CDP-2,3-bis-(O-geranylgeranyl)-sn-glycerol (CDP-archaeol) from 2,3-bis-(O-geranylgeranyl)-sn-glycerol 1-phosphate (DGGGP) and CTP. This reaction is the third ether-bond-formation step in the biosynthesis of archaeal membrane lipids. The polypeptide is CDP-archaeol synthase (Aeropyrum pernix (strain ATCC 700893 / DSM 11879 / JCM 9820 / NBRC 100138 / K1)).